Reading from the N-terminus, the 140-residue chain is FAD synthase (140 aa).

Residues threonine 9 to phenylalanine 10, histidine 14 to histidine 17, and aspartate 92 each bind ATP.

This sequence belongs to the archaeal FAD synthase family. As to quaternary structure, homodimer. A divalent metal cation is required as a cofactor.

The enzyme catalyses FMN + ATP + H(+) = FAD + diphosphate. It participates in cofactor biosynthesis; FAD biosynthesis; FAD from FMN: step 1/1. Catalyzes the transfer of the AMP portion of ATP to flavin mononucleotide (FMN) to produce flavin adenine dinucleotide (FAD) coenzyme. In Natronomonas pharaonis (strain ATCC 35678 / DSM 2160 / CIP 103997 / JCM 8858 / NBRC 14720 / NCIMB 2260 / Gabara) (Halobacterium pharaonis), this protein is FAD synthase.